Consider the following 332-residue polypeptide: MTSFLTAARTEQESISYDMQRLRLFSGTSNPALAREIAAYLGVPDGPRICKRFADGELYVQIQESIRGCDVFLIQPTCAPVNDNLMELLIMVDACQRASARQITAVVPYYGYARADRKTAGRESITAKLTANLLVKSGVNRVLAMDLHSAQIQGYFDIPCDHIYGSPVLVDYLAAQELNEVVVVSPDVGGVARARAFAKQMRDAPLAIIDKRRSGHNVAESLTVIGDVAGKTAILIDDMIDTGGTICSGARLLRQQGAKRVIACASHAVFSPPACERLSEEGLFEQVLVTNSIPIAAERHFPQLQVLSVANMLGEAIWRIHEESSVSSMFRG.

55-57 contacts ATP; that stretch reads DGE. Residues H148 and D187 each contribute to the Mg(2+) site. The active site involves K211. D-ribose 5-phosphate is bound by residues R213, D237, and 241-245; that span reads DTGGT.

It belongs to the ribose-phosphate pyrophosphokinase family. Class I subfamily. Homohexamer. Mg(2+) serves as cofactor.

The protein localises to the cytoplasm. The enzyme catalyses D-ribose 5-phosphate + ATP = 5-phospho-alpha-D-ribose 1-diphosphate + AMP + H(+). The protein operates within metabolic intermediate biosynthesis; 5-phospho-alpha-D-ribose 1-diphosphate biosynthesis; 5-phospho-alpha-D-ribose 1-diphosphate from D-ribose 5-phosphate (route I): step 1/1. Its function is as follows. Involved in the biosynthesis of the central metabolite phospho-alpha-D-ribosyl-1-pyrophosphate (PRPP) via the transfer of pyrophosphoryl group from ATP to 1-hydroxyl of ribose-5-phosphate (Rib-5-P). In Prochlorococcus marinus (strain MIT 9313), this protein is Ribose-phosphate pyrophosphokinase.